Consider the following 243-residue polypeptide: MQFRLFSFALIILNCMDYSHCQGNRWRRSKRASYVSNPICKGCLSCSKDNGCSRCQQKLFFFLRREGMRQYGECLHSCPSGYYGHRAPDMNRCARCRIENCDSCFSKDFCTKCKVGFYLHRGRCFDECPDGFAPLEETMECVEGCEVGHWSEWGTCSRNNRTCGFKWGLETRTRQIVKKPVKDTILCPTIAESRRCKMTMRHCPGGKRTPKAKEKRNKKKKRKLIERAQEQHSVFLATDRANQ.

Residues 1–21 form the signal peptide; it reads MQFRLFSFALIILNCMDYSHC. Intrachain disulfides connect Cys-40/Cys-46, Cys-43/Cys-52, Cys-55/Cys-74, Cys-78/Cys-93, Cys-96/Cys-104, Cys-101/Cys-110, Cys-113/Cys-124, Cys-128/Cys-141, Cys-145/Cys-187, Cys-156/Cys-163, and Cys-196/Cys-203. The stretch at 90 to 134 is one FU repeat; sequence MNRCARCRIENCDSCFSKDFCTKCKVGFYLHRGRCFDECPDGFAP. The TSP type-1 domain occupies 144 to 204; that stretch reads GCEVGHWSEW…RCKMTMRHCP (61 aa). Residue Asn-160 is glycosylated (N-linked (GlcNAc...) asparagine). Basic residues predominate over residues 204–224; the sequence is PGGKRTPKAKEKRNKKKKRKL. The tract at residues 204–243 is disordered; sequence PGGKRTPKAKEKRNKKKKRKLIERAQEQHSVFLATDRANQ.

This sequence belongs to the R-spondin family. As to quaternary structure, interacts with WNT1. Binds heparin. Interacts with LGR4, LGR5 and LGR6. Interacts with E3 ubiquitin ligases RNF43 and ZNRF3.

It is found in the secreted. Its function is as follows. Activator of the canonical Wnt signaling pathway by acting as a ligand for LGR4-6 receptors. Upon binding to LGR4-6 (LGR4, LGR5 or LGR6), LGR4-6 associate with phosphorylated LRP6 and frizzled receptors that are activated by extracellular Wnt receptors, triggering the canonical Wnt signaling pathway to increase expression of target genes. Also regulates the canonical Wnt/beta-catenin-dependent pathway and non-canonical Wnt signaling by acting as an inhibitor of ZNRF3, an important regulator of the Wnt signaling pathway. During embryonic development, plays a crucial role in limb specification, amplifying the Wnt signaling pathway independently of LGR4-6 receptors, possibly by acting as a direct antagonistic ligand to RNF43 and ZNRF3, hence governing the number of limbs an embryo should form. This chain is R-spondin-2 (RSPO2), found in Homo sapiens (Human).